We begin with the raw amino-acid sequence, 291 residues long: Tyrosine recombinase XerD (291 aa).

The Core-binding (CB) domain occupies 1-82 (MEEGLIDRLL…ACKRLYIWME (82 aa)). In terms of domain architecture, Tyr recombinase spans 103–285 (NIPTLITEQQ…ANVWLQGVVK (183 aa)). Active-site residues include arginine 143, lysine 167, histidine 237, arginine 240, and histidine 263. The active-site O-(3'-phospho-DNA)-tyrosine intermediate is tyrosine 272.

The protein belongs to the 'phage' integrase family. XerD subfamily. In terms of assembly, forms a cyclic heterotetrameric complex composed of two molecules of XerC and two molecules of XerD.

Its subcellular location is the cytoplasm. Site-specific tyrosine recombinase, which acts by catalyzing the cutting and rejoining of the recombining DNA molecules. The XerC-XerD complex is essential to convert dimers of the bacterial chromosome into monomers to permit their segregation at cell division. It also contributes to the segregational stability of plasmids. The sequence is that of Tyrosine recombinase XerD from Neisseria meningitidis serogroup A / serotype 4A (strain DSM 15465 / Z2491).